The sequence spans 265 residues: MSWDDAGNDDAVLMDSWDAEVDFAGDEPILDSWDEEPKAKKEAAKPKPKPKAGGKKNAKGEEKKEQVLAIDELDPQTRKELMKKAELESDLNNAADLLGDLEMAEEHPRARAMQKEQELAAQAALLRPAMTKDTPIEDHPLFKAETKKEYQDLRKALATAIVTMHEKSSLNYSSSLAIDLIRDVSKPMSIENIRQTVATLNILIKDKEKAERQARLARVKGGTATGGAGKKKAKAKTNLGGAFKKDQDFDVDDINYDDFGADDFM.

Residues 24 to 34 (AGDEPILDSWD) are compositionally biased toward acidic residues. The segment at 24–74 (AGDEPILDSWDEEPKAKKEAAKPKPKPKAGGKKNAKGEEKKEQVLAIDELD) is disordered. The span at 35–45 (EEPKAKKEAAK) shows a compositional bias: basic and acidic residues. Over residues 46-57 (PKPKPKAGGKKN) the composition is skewed to basic residues. 2 coiled-coil regions span residues 78-106 (RKEL…MAEE) and 190-220 (IENI…ARVK).

It belongs to the eIF-3 subunit J family. As to quaternary structure, component of the eukaryotic translation initiation factor 3 (eIF-3) complex.

Its subcellular location is the cytoplasm. In terms of biological role, component of the eukaryotic translation initiation factor 3 (eIF-3) complex, which is involved in protein synthesis of a specialized repertoire of mRNAs and, together with other initiation factors, stimulates binding of mRNA and methionyl-tRNAi to the 40S ribosome. The eIF-3 complex specifically targets and initiates translation of a subset of mRNAs involved in cell proliferation. The protein is Eukaryotic translation initiation factor 3 subunit J of Candida glabrata (strain ATCC 2001 / BCRC 20586 / JCM 3761 / NBRC 0622 / NRRL Y-65 / CBS 138) (Yeast).